A 427-amino-acid polypeptide reads, in one-letter code: Aspartate aminotransferase, mitochondrial (427 aa).

The transit peptide at 1 to 26 (MALLKSRLLVGVARCQPCLAAVQGRA) directs the protein to the mitochondrion. The substrate site is built by glycine 62, tryptophan 159, and asparagine 212. At lysine 276 the chain carries N6-(pyridoxal phosphate)lysine. Arginine 404 lines the substrate pocket.

It belongs to the class-I pyridoxal-phosphate-dependent aminotransferase family. As to quaternary structure, homodimer. The cofactor is pyridoxal 5'-phosphate.

It localises to the mitochondrion matrix. It carries out the reaction L-aspartate + 2-oxoglutarate = oxaloacetate + L-glutamate. The catalysed reaction is L-kynurenine + 2-oxoglutarate = kynurenate + L-glutamate + H2O. In terms of biological role, catalyzes the irreversible transamination of the L-tryptophan metabolite L-kynurenine to form kynurenic acid (KA). As a member of the malate-aspartate shuttle, it has a key role in the intracellular NAD(H) redox balance. Is important for metabolite exchange between mitochondria and cytosol, and for amino acid metabolism. The sequence is that of Aspartate aminotransferase, mitochondrial (got2) from Xenopus tropicalis (Western clawed frog).